A 500-amino-acid chain; its full sequence is Probable glycine dehydrogenase (decarboxylating) subunit 2 (500 aa).

N6-(pyridoxal phosphate)lysine is present on Lys273.

Belongs to the GcvP family. C-terminal subunit subfamily. As to quaternary structure, the glycine cleavage system is composed of four proteins: P, T, L and H. In this organism, the P 'protein' is a heterodimer of two subunits. The cofactor is pyridoxal 5'-phosphate.

It catalyses the reaction N(6)-[(R)-lipoyl]-L-lysyl-[glycine-cleavage complex H protein] + glycine + H(+) = N(6)-[(R)-S(8)-aminomethyldihydrolipoyl]-L-lysyl-[glycine-cleavage complex H protein] + CO2. Functionally, the glycine cleavage system catalyzes the degradation of glycine. The P protein binds the alpha-amino group of glycine through its pyridoxal phosphate cofactor; CO(2) is released and the remaining methylamine moiety is then transferred to the lipoamide cofactor of the H protein. The sequence is that of Probable glycine dehydrogenase (decarboxylating) subunit 2 from Rhodopirellula baltica (strain DSM 10527 / NCIMB 13988 / SH1).